The chain runs to 83 residues: Transmembrane protein EP84R (83 aa).

Transmembrane regions (helical) follow at residues 31–51 and 59–79; these read IIGV…IIIL and AGSI…FLIY.

The protein belongs to the asfivirus EP84R family.

It localises to the virion membrane. The protein is Transmembrane protein EP84R of Ornithodoros (relapsing fever ticks).